The primary structure comprises 279 residues: Methyltransferase trt5 (279 aa).

S-adenosyl-L-methionine-binding positions include 124–125 (DI) and 152–153 (DV).

It belongs to the class I-like SAM-binding methyltransferase superfamily. In terms of assembly, homodimer.

It functions in the pathway secondary metabolite biosynthesis; terpenoid biosynthesis. Functionally, methyltransferase; part of the gene cluster that mediates the biosynthesis of terretonin, a fungal meroterpenoid that acts as a mycotoxin. The first step of the pathway is the synthesis of 3,5-dimethylorsellinic acid (DMOA) by the polyketide synthase trt4. DMOA is then prenylated into farnesyl-DMOA by the polyprenyl transferase trt2. Methylation by the methyltransferase trt5 then leads to farnesyl-DMOA methyl ester which is further subject to epoxidation by the FAD-dependent monooxygenase trt8 to yield epoxyfarnesyl-DMOA methyl ester. Cyclization of epoxyfarnesyl-DMOA methyl ester by the terpene cyclase trt1 leads to a tetracycle intermediate which is in turn converted to preterretonin. Dehydrogenase trt9 comes next to transform preterretonin to preterrenoid. The FAD-dependent monooxygenase trt3 is then required for the C-hydroxylation at C16 of preterrenoid to yield terrenoid. The cytochrome P450 trt6 catalyzes three successive oxidations to transform terrenoid into an unstable intermediate, which then undergoes the D-ring expansion and unusual rearrangement of the methoxy group to afford the core skeleton of terretonin. Trt14 catalyzes the D-ring expansion of terretonin involving intramolecular methoxy rearrangement as well as the hydrolysis of the expanded D-ring and the methyl ester moiety. Finally, the nonheme iron-dependent dioxygenase trt7 accomplishes the last two oxidation reactions steps to complete the biosynthesis of terretonin. Terretonin C is produced via spontaneous decarboxylation of the terretonin precursor. Another shunt product of the terretonin biosynthesis is dihydrofarnesyl-DMOA, derived from epoxyfarnesyl-DMOA through hydrolysis of the epoxide. In Aspergillus terreus (strain NIH 2624 / FGSC A1156), this protein is Methyltransferase trt5.